The primary structure comprises 238 residues: Probable succinyl-CoA:3-ketoacid coenzyme A transferase subunit A (238 aa).

Gly24–Gly30 serves as a coordination point for CoA.

The protein belongs to the 3-oxoacid CoA-transferase subunit A family. In terms of assembly, heterodimer of a subunit A and a subunit B.

The enzyme catalyses a 3-oxo acid + succinyl-CoA = a 3-oxoacyl-CoA + succinate. The sequence is that of Probable succinyl-CoA:3-ketoacid coenzyme A transferase subunit A (scoA) from Bacillus subtilis (strain 168).